The sequence spans 144 residues: Prefoldin subunit alpha (144 aa).

This sequence belongs to the prefoldin alpha subunit family. In terms of assembly, heterohexamer of two alpha and four beta subunits.

It localises to the cytoplasm. Functionally, molecular chaperone capable of stabilizing a range of proteins. Seems to fulfill an ATP-independent, HSP70-like function in archaeal de novo protein folding. This chain is Prefoldin subunit alpha, found in Methanococcus aeolicus (strain ATCC BAA-1280 / DSM 17508 / OCM 812 / Nankai-3).